We begin with the raw amino-acid sequence, 709 residues long: Peptidoglycan D,D-transpeptidase FtsI homolog (709 aa).

Residues 20-42 (LQGIYYAFLSISTMIKIALDPYS) form a helical membrane-spanning segment. The active-site Acyl-ester intermediate is the serine 341.

It belongs to the transpeptidase family.

The protein resides in the plastid. Its subcellular location is the chloroplast membrane. The enzyme catalyses Preferential cleavage: (Ac)2-L-Lys-D-Ala-|-D-Ala. Also transpeptidation of peptidyl-alanyl moieties that are N-acyl substituents of D-alanine.. The polypeptide is Peptidoglycan D,D-transpeptidase FtsI homolog (ftsI) (Nephroselmis olivacea (Green alga)).